We begin with the raw amino-acid sequence, 488 residues long: Inosine-5'-monophosphate dehydrogenase (488 aa).

CBS domains follow at residues 95–153 (VITN…SIKI) and 157–213 (MTKE…PHAA). Residues aspartate 250 and 300–302 (GIG) contribute to the NAD(+) site. K(+) is bound by residues glycine 302 and glycine 304. Serine 305 serves as a coordination point for IMP. K(+) is bound at residue cysteine 307. Cysteine 307 functions as the Thioimidate intermediate in the catalytic mechanism. IMP-binding positions include 340–342 (DGG), 363–364 (GS), and 387–391 (YRGMG). Arginine 403 acts as the Proton acceptor in catalysis. Residue glutamate 417 participates in IMP binding. Residues 467–488 (AGLAESHPHNVQITKESPNYSF) form a disordered region. 3 residues coordinate K(+): glutamate 471, serine 472, and histidine 473. The segment covering 475-488 (HNVQITKESPNYSF) has biased composition (polar residues).

This sequence belongs to the IMPDH/GMPR family. Homotetramer. K(+) serves as cofactor.

The catalysed reaction is IMP + NAD(+) + H2O = XMP + NADH + H(+). Its pathway is purine metabolism; XMP biosynthesis via de novo pathway; XMP from IMP: step 1/1. Mycophenolic acid (MPA) is a non-competitive inhibitor that prevents formation of the closed enzyme conformation by binding to the same site as the amobile flap. In contrast, mizoribine monophosphate (MZP) is a competitive inhibitor that induces the closed conformation. MPA is a potent inhibitor of mammalian IMPDHs but a poor inhibitor of the bacterial enzymes. MZP is a more potent inhibitor of bacterial IMPDH. Functionally, catalyzes the conversion of inosine 5'-phosphate (IMP) to xanthosine 5'-phosphate (XMP), the first committed and rate-limiting step in the de novo synthesis of guanine nucleotides, and therefore plays an important role in the regulation of cell growth. The protein is Inosine-5'-monophosphate dehydrogenase of Staphylococcus haemolyticus (strain JCSC1435).